The sequence spans 62 residues: Large ribosomal subunit protein uL29 (62 aa).

Belongs to the universal ribosomal protein uL29 family.

This is Large ribosomal subunit protein uL29 from Enterococcus faecalis (strain ATCC 700802 / V583).